The primary structure comprises 85 residues: ATP synthase subunit c (85 aa).

2 helical membrane-spanning segments follow: residues 10–30 and 53–73; these read IAVA…FGLL and FIVA…ALFF.

This sequence belongs to the ATPase C chain family. In terms of assembly, F-type ATPases have 2 components, F(1) - the catalytic core - and F(0) - the membrane proton channel. F(1) has five subunits: alpha(3), beta(3), gamma(1), delta(1), epsilon(1). F(0) has three main subunits: a(1), b(2) and c(10-14). The alpha and beta chains form an alternating ring which encloses part of the gamma chain. F(1) is attached to F(0) by a central stalk formed by the gamma and epsilon chains, while a peripheral stalk is formed by the delta and b chains.

The protein resides in the cell inner membrane. In terms of biological role, f(1)F(0) ATP synthase produces ATP from ADP in the presence of a proton or sodium gradient. F-type ATPases consist of two structural domains, F(1) containing the extramembraneous catalytic core and F(0) containing the membrane proton channel, linked together by a central stalk and a peripheral stalk. During catalysis, ATP synthesis in the catalytic domain of F(1) is coupled via a rotary mechanism of the central stalk subunits to proton translocation. Its function is as follows. Key component of the F(0) channel; it plays a direct role in translocation across the membrane. A homomeric c-ring of between 10-14 subunits forms the central stalk rotor element with the F(1) delta and epsilon subunits. This chain is ATP synthase subunit c, found in Pseudomonas syringae pv. syringae (strain B728a).